The following is a 258-amino-acid chain: Thrombin-like enzyme saxthrombin (258 aa).

The first 18 residues, 1 to 18, serve as a signal peptide directing secretion; the sequence is MVLIRVLANLLILQLSYA. Positions 19 to 24 are excised as a propeptide; that stretch reads QKSSEL. Positions 25–249 constitute a Peptidase S1 domain; the sequence is VIGGDECNIN…YNHWIQSIIA (225 aa). Intrachain disulfides connect Cys31–Cys163, Cys50–Cys66, Cys98–Cys256, Cys142–Cys210, Cys174–Cys189, and Cys200–Cys225. A glycan (N-linked (GlcNAc...) asparagine) is linked at Asn44. Residues His65 and Asp110 each act as charge relay system in the active site. Residue Ser204 is the Charge relay system of the active site. N-linked (GlcNAc...) asparagine glycosylation is present at Asn251.

The protein belongs to the peptidase S1 family. Snake venom subfamily. Monomer. As to expression, expressed by the venom gland.

It localises to the secreted. Functionally, thrombin-like snake venom serine protease that shows strong blood coagulation activity in vitro. The protein is Thrombin-like enzyme saxthrombin of Gloydius intermedius (Central Asian pit viper).